A 916-amino-acid chain; its full sequence is Extracellular signal-regulated kinase 7 (916 aa).

A Protein kinase domain is found at 25–319; the sequence is FDVRKRMGKG…AKEAIRHPYV (295 aa). Residues 31–39 and Lys54 contribute to the ATP site; that span reads MGKGAYGIV. The active-site Proton acceptor is Asp149. Polar residues-rich tracts occupy residues 364-376 and 390-403; these read CSNRTVSNSTPSS and QARTTSAKQPTTSP. Disordered regions lie at residues 364-419, 452-477, 588-608, 711-742, 792-813, and 883-916; these read CSNR…TQSR, PPAAAPPAPAATAPAVPRKSGDKSVP, PSETEHRQQREERAYQRQMKR, KKLQRSKESDEKDEDDRRALPEGIGGPGSQNY, ELNPAPDSGGRDSGSEHSPGRD, and CRHRHHKPNHHAPYDHMRPTEDDIQEADSLPESN. Basic and acidic residues-rich tracts occupy residues 590–608, 715–730, and 800–811; these read ETEHRQQREERAYQRQMKR, RSKESDEKDEDDRRAL, and GGRDSGSEHSPG. Basic residues predominate over residues 883-892; sequence CRHRHHKPNH. Basic and acidic residues predominate over residues 894–903; that stretch reads APYDHMRPTE.

Belongs to the protein kinase superfamily. Ser/Thr protein kinase family.

The enzyme catalyses L-seryl-[protein] + ATP = O-phospho-L-seryl-[protein] + ADP + H(+). The catalysed reaction is L-threonyl-[protein] + ATP = O-phospho-L-threonyl-[protein] + ADP + H(+). Its function is as follows. Atypical MAPK protein that regulates protein secretion in a kinase activity-dependent manner. In response to starvation regulates protein secretion by mediating transitional endoplasmic reticulum site disassembly. Mediates inhibition of insulin-like peptide secretion upon disturbed ribosome biogenesis and acts as a downstream effector of TP53. The polypeptide is Extracellular signal-regulated kinase 7 (Drosophila melanogaster (Fruit fly)).